We begin with the raw amino-acid sequence, 206 residues long: Methylthioribulose-1-phosphate dehydratase (206 aa).

Zn(2+)-binding residues include His-96 and His-98.

Belongs to the aldolase class II family. MtnB subfamily. Requires Zn(2+) as cofactor.

It catalyses the reaction 5-(methylsulfanyl)-D-ribulose 1-phosphate = 5-methylsulfanyl-2,3-dioxopentyl phosphate + H2O. Its pathway is amino-acid biosynthesis; L-methionine biosynthesis via salvage pathway; L-methionine from S-methyl-5-thio-alpha-D-ribose 1-phosphate: step 2/6. Its function is as follows. Catalyzes the dehydration of methylthioribulose-1-phosphate (MTRu-1-P) into 2,3-diketo-5-methylthiopentyl-1-phosphate (DK-MTP-1-P). The sequence is that of Methylthioribulose-1-phosphate dehydratase from Exiguobacterium sibiricum (strain DSM 17290 / CCUG 55495 / CIP 109462 / JCM 13490 / 255-15).